Reading from the N-terminus, the 360-residue chain is Peptide chain release factor 1 (360 aa).

An N5-methylglutamine modification is found at Gln-237.

The protein belongs to the prokaryotic/mitochondrial release factor family. Post-translationally, methylated by PrmC. Methylation increases the termination efficiency of RF1.

The protein localises to the cytoplasm. Its function is as follows. Peptide chain release factor 1 directs the termination of translation in response to the peptide chain termination codons UAG and UAA. This is Peptide chain release factor 1 from Pseudomonas putida (strain ATCC 47054 / DSM 6125 / CFBP 8728 / NCIMB 11950 / KT2440).